The following is a 319-amino-acid chain: Tetrahydromethanopterin S-methyltransferase subunit H (319 aa).

It belongs to the MtrH family. In terms of assembly, the complex is composed of 8 subunits; MtrA, MtrB, MtrC, MtrD, MtrE, MtrF, MtrG and MtrH.

It catalyses the reaction 5-methyl-5,6,7,8-tetrahydromethanopterin + coenzyme M + 2 Na(+)(in) = 5,6,7,8-tetrahydromethanopterin + methyl-coenzyme M + 2 Na(+)(out). It participates in one-carbon metabolism; methanogenesis from CO(2); methyl-coenzyme M from 5,10-methylene-5,6,7,8-tetrahydromethanopterin: step 2/2. Functionally, part of a complex that catalyzes the formation of methyl-coenzyme M and tetrahydromethanopterin from coenzyme M and methyl-tetrahydromethanopterin. This is an energy-conserving, sodium-ion translocating step. MtrH catalyzes the transfer of the methyl group from methyl-tetrahydromethanopterin to the corrinoid prosthetic group of MtrA. This chain is Tetrahydromethanopterin S-methyltransferase subunit H, found in Methanococcus maripaludis (strain DSM 14266 / JCM 13030 / NBRC 101832 / S2 / LL).